Consider the following 464-residue polypeptide: Forkhead box protein N3 (464 aa).

Disordered regions lie at residues 1–53 (MGPI…EKGG) and 85–108 (PVQD…DAKQ). Over residues 14–30 (TGISVSSQCYRSSTLSN) the composition is skewed to polar residues. The fork-head DNA-binding region spans 113–209 (KPPYSFSCLI…QALKKTPYHP (97 aa)). Disordered regions lie at residues 294 to 337 (MESE…SSSA) and 381 to 428 (LVES…MKEA). Positions 316-336 (SSAKSANKRSSSPSDSISSSS) are enriched in low complexity. Residues 389–401 (QHKKKQHLLKLRR) are compositionally biased toward basic residues.

Its subcellular location is the nucleus. In terms of biological role, acts as a transcriptional repressor. May be involved in DNA damage-inducible cell cycle arrests (checkpoints). The chain is Forkhead box protein N3 from Xenopus tropicalis (Western clawed frog).